A 429-amino-acid polypeptide reads, in one-letter code: Argininosuccinate lyase (429 aa).

The protein belongs to the lyase 1 family. Argininosuccinate lyase subfamily.

It localises to the cytoplasm. It catalyses the reaction 2-(N(omega)-L-arginino)succinate = fumarate + L-arginine. Its pathway is amino-acid biosynthesis; L-arginine biosynthesis; L-arginine from L-ornithine and carbamoyl phosphate: step 3/3. The protein is Argininosuccinate lyase of Pyrobaculum aerophilum (strain ATCC 51768 / DSM 7523 / JCM 9630 / CIP 104966 / NBRC 100827 / IM2).